Reading from the N-terminus, the 517-residue chain is Probable anion transporter 6, chloroplastic (517 aa).

The tract at residues 51 to 73 is disordered; sequence TERVRESKKLPPKDPIEDPKPQL. The span at 52-70 shows a compositional bias: basic and acidic residues; it reads ERVRESKKLPPKDPIEDPK. Helical transmembrane passes span 130-150, 170-190, 229-249, 255-275, 312-332, 352-372, 397-417, 420-440, 452-472, and 484-504; these read FGWSSSVAGLVQSSFFWGYAL, IGVFTWSFATALVPLLAGFMP, FVFGGLSLGSVMGLLLAPPII, ESVFYLFGLLGVGWFVGFQFL, SFFQSPAVWAMIYTHFCGSWG, LTEAAWVSILPPLASIVVTSL, IAFVAPAICMTLSSVDIGLPP, IVGILTAGLALSSFALSGLYC, ILLGITNTVGAVPGIVGVALT, and MSLFVPSIFFYLTGTVVWLAF.

It belongs to the major facilitator superfamily. Sodium/anion cotransporter (TC 2.A.1.14) family. As to expression, expressed in leaf veins and sepals.

It is found in the plastid. It localises to the chloroplast membrane. Its function is as follows. Inorganic phosphate and probable anion transporter. This Arabidopsis thaliana (Mouse-ear cress) protein is Probable anion transporter 6, chloroplastic (ANTR6).